The primary structure comprises 101 residues: MAGQKIRIRLKAYDHEAIDASARKIVETVTRTGARVVGPVPLPTEKNVYAVIRSPHKYKDSREHFEMRTHKRLIDILDPTPKTVDALMRIDLPASVDVNIQ.

It belongs to the universal ribosomal protein uS10 family. As to quaternary structure, part of the 30S ribosomal subunit.

Involved in the binding of tRNA to the ribosomes. This is Small ribosomal subunit protein uS10 from Corynebacterium efficiens (strain DSM 44549 / YS-314 / AJ 12310 / JCM 11189 / NBRC 100395).